A 666-amino-acid polypeptide reads, in one-letter code: Magnesium-chelatase 67 kDa subunit (666 aa).

Residue 37–44 (GRRGTGKT) coordinates ATP. The segment at 327-367 (LPDEEEQMQPPPPPPPPPPPPEPDKPDDPETPPDEAPKDEQ) is disordered. Pro residues predominate over residues 335-347 (QPPPPPPPPPPPP). The VWFA domain occupies 475-661 (LIIFVVDASG…SLAETVKSGV (187 aa)).

This sequence belongs to the Mg-chelatase subunits D/I family.

It carries out the reaction protoporphyrin IX + Mg(2+) + ATP + H2O = Mg-protoporphyrin IX + ADP + phosphate + 3 H(+). It functions in the pathway porphyrin-containing compound metabolism; bacteriochlorophyll biosynthesis. In terms of biological role, involved in bacteriochlorophyll biosynthesis; introduces a magnesium ion into protoporphyrin IX to yield Mg-protoporphyrin IX. The polypeptide is Magnesium-chelatase 67 kDa subunit (bchD) (Heliobacterium mobile (Heliobacillus mobilis)).